A 159-amino-acid chain; its full sequence is Succinate dehydrogenase [ubiquinone] cytochrome b small subunit, mitochondrial (159 aa).

A mitochondrion-targeting transit peptide spans 1-56; it reads MAVLLKLGVLCSGQGARALLLRSRVVRPAYVSAFLQDQPTQGRCGTQHIHLSPSHH. Over 57 to 63 the chain is Mitochondrial matrix; that stretch reads SGSKAAS. A helical transmembrane segment spans residues 64–85; the sequence is LHWTSERVVSVLLLGLIPAGYL. Residues 86 to 90 are Mitochondrial intermembrane-facing; sequence NPCSV. Residues 91–111 traverse the membrane as a helical segment; it reads VDYSLAAALTLHSHWGLGQVV. Histidine 102 contacts heme b. Residues 112–120 are Mitochondrial matrix-facing; that stretch reads TDYVHGDTL. Tyrosine 114 contacts a ubiquinone. The helical transmembrane segment at 121-142 threads the bilayer; that stretch reads PKAARAGLLALSALTFAGLCYF. At 143 to 159 the chain is on the mitochondrial intermembrane side; the sequence is NYHDVGICRAVAMLWKL.

Belongs to the CybS family. As to quaternary structure, component of complex II composed of four subunits: the flavoprotein (FP) SDHA, iron-sulfur protein (IP) SDHB, and a cytochrome b560 composed of SDHC and SDHD.

Its subcellular location is the mitochondrion inner membrane. It participates in carbohydrate metabolism; tricarboxylic acid cycle. Functionally, membrane-anchoring subunit of succinate dehydrogenase (SDH) that is involved in complex II of the mitochondrial electron transport chain and is responsible for transferring electrons from succinate to ubiquinone (coenzyme Q). SDH also oxidizes malate to the non-canonical enol form of oxaloacetate, enol-oxaloacetate. Enol-oxaloacetate, which is a potent inhibitor of the succinate dehydrogenase activity, is further isomerized into keto-oxaloacetate. This Mus musculus (Mouse) protein is Succinate dehydrogenase [ubiquinone] cytochrome b small subunit, mitochondrial (Sdhd).